Reading from the N-terminus, the 126-residue chain is Ribonuclease P protein component (126 aa).

The protein belongs to the RnpA family. Consists of a catalytic RNA component (M1 or rnpB) and a protein subunit.

It catalyses the reaction Endonucleolytic cleavage of RNA, removing 5'-extranucleotides from tRNA precursor.. RNaseP catalyzes the removal of the 5'-leader sequence from pre-tRNA to produce the mature 5'-terminus. It can also cleave other RNA substrates such as 4.5S RNA. The protein component plays an auxiliary but essential role in vivo by binding to the 5'-leader sequence and broadening the substrate specificity of the ribozyme. The protein is Ribonuclease P protein component of Brevibacillus brevis (strain 47 / JCM 6285 / NBRC 100599).